The following is a 199-amino-acid chain: Protein-methionine-sulfoxide reductase heme-binding subunit MsrQ (199 aa).

4 helical membrane passes run 10–30 (WLKV…FWAI), 82–102 (LWCF…ELGI), 116–136 (PYLT…LTST), and 153–173 (VVYL…KILS).

It belongs to the MsrQ family. As to quaternary structure, heterodimer of a catalytic subunit (MsrP) and a heme-binding subunit (MsrQ). FMN is required as a cofactor. The cofactor is heme b.

The protein localises to the cell inner membrane. In terms of biological role, part of the MsrPQ system that repairs oxidized periplasmic proteins containing methionine sulfoxide residues (Met-O), using respiratory chain electrons. Thus protects these proteins from oxidative-stress damage caused by reactive species of oxygen and chlorine generated by the host defense mechanisms. MsrPQ is essential for the maintenance of envelope integrity under bleach stress, rescuing a wide series of structurally unrelated periplasmic proteins from methionine oxidation, including the primary periplasmic chaperone SurA and the lipoprotein Pal. MsrQ provides electrons for reduction to the reductase catalytic subunit MsrP, using the quinone pool of the respiratory chain. This chain is Protein-methionine-sulfoxide reductase heme-binding subunit MsrQ, found in Salmonella agona (strain SL483).